Consider the following 680-residue polypeptide: Translation factor GUF1 homolog, chloroplastic (680 aa).

Residues 1 to 51 (MAAKINSLAALVSLQASHHHHXSTPFYFSPFSPHLSTTLTSRRRSLRSAVV) constitute a chloroplast transit peptide. The 182-residue stretch at 83-264 (SNIRNFCIIA…AIVKRIPPPC (182 aa)) folds into the tr-type G domain. Residues 92-99 (AHIDHGKS), 157-161 (DTPGH), and 211-214 (NKID) each bind GTP.

The protein belongs to the TRAFAC class translation factor GTPase superfamily. Classic translation factor GTPase family. LepA subfamily.

It localises to the plastid. The protein resides in the chloroplast. It carries out the reaction GTP + H2O = GDP + phosphate + H(+). Its function is as follows. Promotes chloroplast protein synthesis. May act as a fidelity factor of the translation reaction, by catalyzing a one-codon backward translocation of tRNAs on improperly translocated ribosomes. The chain is Translation factor GUF1 homolog, chloroplastic from Vitis vinifera (Grape).